We begin with the raw amino-acid sequence, 312 residues long: Homoserine O-succinyltransferase (312 aa).

Cys142 serves as the catalytic Acyl-thioester intermediate. 2 residues coordinate substrate: Lys163 and Ser192. The active-site Proton acceptor is His235. Glu237 is a catalytic residue. Substrate is bound at residue Arg249.

This sequence belongs to the MetA family.

The protein localises to the cytoplasm. The enzyme catalyses L-homoserine + succinyl-CoA = O-succinyl-L-homoserine + CoA. It functions in the pathway amino-acid biosynthesis; L-methionine biosynthesis via de novo pathway; O-succinyl-L-homoserine from L-homoserine: step 1/1. In terms of biological role, transfers a succinyl group from succinyl-CoA to L-homoserine, forming succinyl-L-homoserine. In Aliivibrio salmonicida (strain LFI1238) (Vibrio salmonicida (strain LFI1238)), this protein is Homoserine O-succinyltransferase.